A 379-amino-acid polypeptide reads, in one-letter code: Sporozoite surface protein P36 (379 aa).

The N-terminal stretch at 1–33 (MAYNIWEEYIMANFHNVYPVVTNLFLFIALSYS) is a signal peptide. 6-Cys domains follow at residues 69–206 (FVFF…VKAN) and 215–379 (FIKG…TVES). 3 cysteine pairs are disulfide-bonded: C91-C101, C115-C186, and C129-C184. N-linked (GlcNAc...) asparagine glycans are attached at residues N98 and N118. N206 is a glycosylation site (N-linked (GlcNAc...) asparagine). 3 disulfide bridges follow: C219–C243, C257–C360, and C295–C358. Residues N298 and N374 are each glycosylated (N-linked (GlcNAc...) asparagine).

The protein resides in the cell surface. Its subcellular location is the cell membrane. In terms of biological role, involved in sporozoite infection of hepatocytes and replication therein. This is Sporozoite surface protein P36 (PF36) from Plasmodium falciparum (isolate 3D7).